The sequence spans 312 residues: Glyoxylate/hydroxypyruvate reductase A (312 aa).

Residue Arg-227 is part of the active site. His-275 acts as the Proton donor in catalysis.

The protein belongs to the D-isomer specific 2-hydroxyacid dehydrogenase family. GhrA subfamily.

It is found in the cytoplasm. The enzyme catalyses glycolate + NADP(+) = glyoxylate + NADPH + H(+). It catalyses the reaction (R)-glycerate + NAD(+) = 3-hydroxypyruvate + NADH + H(+). The catalysed reaction is (R)-glycerate + NADP(+) = 3-hydroxypyruvate + NADPH + H(+). In terms of biological role, catalyzes the NADPH-dependent reduction of glyoxylate and hydroxypyruvate into glycolate and glycerate, respectively. In Escherichia coli (strain UTI89 / UPEC), this protein is Glyoxylate/hydroxypyruvate reductase A.